A 642-amino-acid chain; its full sequence is Probable serine/threonine-protein kinase drkA (642 aa).

The first 23 residues, 1–23 (MKKLPFLIIIIYIFLILISISSS), serve as a signal peptide directing secretion. Residues 24–322 (IDYNYNNDID…KPTISLLKKY (299 aa)) are Extracellular-facing. Residues 106–128 (SENSGSGSNSNSNSKNTDSSTGP) are compositionally biased toward low complexity. Residues 106–136 (SENSGSGSNSNSNSKNTDSSTGPTPSPISIN) form a disordered region. N-linked (GlcNAc...) asparagine glycosylation is found at asparagine 136, asparagine 140, asparagine 158, asparagine 244, and asparagine 271. The chain crosses the membrane as a helical span at residues 323–343 (LIIGFSIVGGLLIIGGCFLLI). Residues 344–642 (RNRYRSSGYY…SDLQYVRQQL (299 aa)) are Cytoplasmic-facing. Residues 374–627 (IKIGVRIGKG…EQCLERLESI (254 aa)) enclose the Protein kinase domain. Residues 380 to 388 (IGKGNYGEV) and lysine 401 contribute to the ATP site. Aspartate 497 (proton acceptor) is an active-site residue.

The protein belongs to the protein kinase superfamily. TKL Ser/Thr protein kinase family.

The protein resides in the membrane. The catalysed reaction is L-seryl-[protein] + ATP = O-phospho-L-seryl-[protein] + ADP + H(+). It catalyses the reaction L-threonyl-[protein] + ATP = O-phospho-L-threonyl-[protein] + ADP + H(+). The protein is Probable serine/threonine-protein kinase drkA (drkA) of Dictyostelium discoideum (Social amoeba).